We begin with the raw amino-acid sequence, 492 residues long: Ketol-acid reductoisomerase (NADP(+)) (492 aa).

One can recognise a KARI N-terminal Rossmann domain in the interval 14–208 (LDQLGKCRFM…GGHRAGVLQS (195 aa)). NADP(+)-binding positions include 45-48 (CGAQ), arginine 68, arginine 76, serine 78, and 108-110 (DKQ). Histidine 132 is an active-site residue. Glycine 158 contributes to the NADP(+) binding site. KARI C-terminal knotted domains are found at residues 209 to 344 (SFVA…NAPQ) and 345 to 485 (FDGK…MKDM). Residues aspartate 217, glutamate 221, glutamate 389, and glutamate 393 each contribute to the Mg(2+) site. Serine 414 contributes to the substrate binding site.

It belongs to the ketol-acid reductoisomerase family. Mg(2+) serves as cofactor.

It carries out the reaction (2R)-2,3-dihydroxy-3-methylbutanoate + NADP(+) = (2S)-2-acetolactate + NADPH + H(+). The catalysed reaction is (2R,3R)-2,3-dihydroxy-3-methylpentanoate + NADP(+) = (S)-2-ethyl-2-hydroxy-3-oxobutanoate + NADPH + H(+). It functions in the pathway amino-acid biosynthesis; L-isoleucine biosynthesis; L-isoleucine from 2-oxobutanoate: step 2/4. Its pathway is amino-acid biosynthesis; L-valine biosynthesis; L-valine from pyruvate: step 2/4. In terms of biological role, involved in the biosynthesis of branched-chain amino acids (BCAA). Catalyzes an alkyl-migration followed by a ketol-acid reduction of (S)-2-acetolactate (S2AL) to yield (R)-2,3-dihydroxy-isovalerate. In the isomerase reaction, S2AL is rearranged via a Mg-dependent methyl migration to produce 3-hydroxy-3-methyl-2-ketobutyrate (HMKB). In the reductase reaction, this 2-ketoacid undergoes a metal-dependent reduction by NADPH to yield (R)-2,3-dihydroxy-isovalerate. In Pectobacterium carotovorum subsp. carotovorum (strain PC1), this protein is Ketol-acid reductoisomerase (NADP(+)).